The sequence spans 132 residues: Small ribosomal subunit protein uS8 (132 aa).

Belongs to the universal ribosomal protein uS8 family. Part of the 30S ribosomal subunit. Contacts proteins S5 and S12.

In terms of biological role, one of the primary rRNA binding proteins, it binds directly to 16S rRNA central domain where it helps coordinate assembly of the platform of the 30S subunit. This chain is Small ribosomal subunit protein uS8, found in Mycobacterium sp. (strain KMS).